Reading from the N-terminus, the 307-residue chain is G-protein coupled receptor 35 (307 aa).

At 1–18 the chain is on the extracellular side; the sequence is MNSTTCNSTLTWPASVNN. 2 N-linked (GlcNAc...) asparagine glycosylation sites follow: asparagine 2 and asparagine 7. The chain crosses the membrane as a helical span at residues 19-39; sequence FFIIYSALLLVLGLLLNSVAL. Residues 40 to 53 lie on the Cytoplasmic side of the membrane; the sequence is WVFCYRMHQWTETR. The helical transmembrane segment at 54–74 threads the bilayer; that stretch reads IYMTNLAVADLCLLCSLPFVL. At 75–88 the chain is on the extracellular side; sequence YSLKYSSSDTPVCQ. Cysteine 87 and cysteine 160 are joined by a disulfide. The helical transmembrane segment at 89-110 threads the bilayer; that stretch reads LSQGIYLANRYMSISLVTAIAV. The Cytoplasmic segment spans residues 111-129; that stretch reads DRYVAVRHPLRARELRSPR. The chain crosses the membrane as a helical span at residues 130–150; sequence QAAAVCVALWVIVVTSLVVRW. Residues 151–176 are Extracellular-facing; it reads RLGMQEGGFCFSSQTRRNFSTTAFSL. A helical transmembrane segment spans residues 177-197; that stretch reads LGFYLPLAIVVFCSLQVVTVL. Residues 198–217 are Cytoplasmic-facing; that stretch reads SRRPAADVGQAEATQKATHM. Residues 218-238 form a helical membrane-spanning segment; sequence VWANLAVFVICFLPLHVVLTV. At 239-257 the chain is on the extracellular side; the sequence is QVSLNLNTCAARDTFSRAL. Residues 258–278 form a helical membrane-spanning segment; it reads SITGKLSDTNCCLDAICYYYM. Residues 279–307 lie on the Cytoplasmic side of the membrane; the sequence is AREFQEASKPATSSNTPHKSQDSQILSLT. 4 positions are modified to phosphoserine: serine 286, serine 292, serine 298, and serine 301. A disordered region spans residues 288 to 307; it reads PATSSNTPHKSQDSQILSLT.

Belongs to the G-protein coupled receptor 1 family. In terms of processing, multiply phosphorylated in clusters of serines and threonines in the C-terminal tail. Phosphorylation of Ser-298 and Ser-301 is mediated by GRK5 and/or GRK6. As to expression, predominantly expressed in immune and gastrointestinal tissues. Strongly GPR35 expressed in colonic macrophages.

It localises to the cell membrane. Functionally, G-protein coupled receptor that binds to several ligands including the tryptophan metabolite kynurenic acid (KYNA), lysophosphatidic acid (LPA) or 5-hydroxyindoleacetic acid (5-HIAA) with high affinity, leading to rapid and transient activation of numerous intracellular signaling pathways. Plays a role in neutrophil recruitment to sites of inflammation and bacterial clearance through the major serotonin metabolite 5-HIAA that acts as a physiological ligand. Stimulates lipid metabolism, thermogenic, and anti-inflammatory gene expression in adipose tissue once activated by kynurenic acid. In macrophages, activation by lysophosphatidic acid promotes GPR35-induced signaling with a distinct transcriptional profile characterized by TNF production associated with ERK and NF-kappa-B activation. In turn, induces chemotaxis of macrophages. This is G-protein coupled receptor 35 (Gpr35) from Mus musculus (Mouse).